The primary structure comprises 176 residues: ATP-dependent protease subunit HslV (176 aa).

Residue Thr2 is part of the active site. The Na(+) site is built by Gly157, Cys160, and Thr163.

The protein belongs to the peptidase T1B family. HslV subfamily. As to quaternary structure, a double ring-shaped homohexamer of HslV is capped on each side by a ring-shaped HslU homohexamer. The assembly of the HslU/HslV complex is dependent on binding of ATP.

Its subcellular location is the cytoplasm. The catalysed reaction is ATP-dependent cleavage of peptide bonds with broad specificity.. Its activity is regulated as follows. Allosterically activated by HslU binding. Protease subunit of a proteasome-like degradation complex believed to be a general protein degrading machinery. This chain is ATP-dependent protease subunit HslV, found in Pseudomonas entomophila (strain L48).